A 127-amino-acid chain; its full sequence is Small ribosomal subunit protein uS13 (127 aa).

The segment at 93-127 (RRSLPVRGQRTHTNARTRKGPRRGTVAGKKKATKT) is disordered.

The protein belongs to the universal ribosomal protein uS13 family. As to quaternary structure, part of the 30S ribosomal subunit. Forms a loose heterodimer with protein S19. Forms two bridges to the 50S subunit in the 70S ribosome.

In terms of biological role, located at the top of the head of the 30S subunit, it contacts several helices of the 16S rRNA. In the 70S ribosome it contacts the 23S rRNA (bridge B1a) and protein L5 of the 50S subunit (bridge B1b), connecting the 2 subunits; these bridges are implicated in subunit movement. Contacts the tRNAs in the A and P-sites. The protein is Small ribosomal subunit protein uS13 of Acidobacterium capsulatum (strain ATCC 51196 / DSM 11244 / BCRC 80197 / JCM 7670 / NBRC 15755 / NCIMB 13165 / 161).